We begin with the raw amino-acid sequence, 117 residues long: Ribonuclease P protein component (117 aa).

Belongs to the RnpA family. Consists of a catalytic RNA component (M1 or rnpB) and a protein subunit.

The enzyme catalyses Endonucleolytic cleavage of RNA, removing 5'-extranucleotides from tRNA precursor.. Its function is as follows. RNaseP catalyzes the removal of the 5'-leader sequence from pre-tRNA to produce the mature 5'-terminus. It can also cleave other RNA substrates such as 4.5S RNA. The protein component plays an auxiliary but essential role in vivo by binding to the 5'-leader sequence and broadening the substrate specificity of the ribozyme. This is Ribonuclease P protein component from Thermotoga maritima (strain ATCC 43589 / DSM 3109 / JCM 10099 / NBRC 100826 / MSB8).